Here is a 92-residue protein sequence, read N- to C-terminus: Small ribosomal subunit protein uS19 (92 aa).

Belongs to the universal ribosomal protein uS19 family.

In terms of biological role, protein S19 forms a complex with S13 that binds strongly to the 16S ribosomal RNA. The sequence is that of Small ribosomal subunit protein uS19 from Lactococcus lactis subsp. cremoris (strain MG1363).